Here is a 422-residue protein sequence, read N- to C-terminus: Histidine--tRNA ligase (422 aa).

Belongs to the class-II aminoacyl-tRNA synthetase family. Homodimer.

The protein localises to the cytoplasm. It carries out the reaction tRNA(His) + L-histidine + ATP = L-histidyl-tRNA(His) + AMP + diphosphate + H(+). The protein is Histidine--tRNA ligase of Mycolicibacterium vanbaalenii (strain DSM 7251 / JCM 13017 / BCRC 16820 / KCTC 9966 / NRRL B-24157 / PYR-1) (Mycobacterium vanbaalenii).